We begin with the raw amino-acid sequence, 48 residues long: Histone H4 (48 aa).

Positions 1–14 (MGGKGGKGGKGLGK) are enriched in gly residues. A disordered region spans residues 1-23 (MGGKGGKGGKGLGKVGAKKRHSR).

This sequence belongs to the histone H4 family. The nucleosome is a histone octamer containing two molecules each of H2A, H2B, H3 and H4 assembled in one H3-H4 heterotetramer and two H2A-H2B heterodimers. The octamer wraps approximately 147 bp of DNA.

It is found in the nucleus. It localises to the chromosome. In terms of biological role, core component of nucleosome. Nucleosomes wrap and compact DNA into chromatin, limiting DNA accessibility to the cellular machineries which require DNA as a template. Histones thereby play a central role in transcription regulation, DNA repair, DNA replication and chromosomal stability. DNA accessibility is regulated via a complex set of post-translational modifications of histones, also called histone code, and nucleosome remodeling. The sequence is that of Histone H4 from Blepharisma japonicum.